A 369-amino-acid polypeptide reads, in one-letter code: Maltose/maltodextrin import ATP-binding protein MalK (369 aa).

The region spanning 4–234 (VQLRNVTKAW…PADRFVAGFI (231 aa)) is the ABC transporter domain. Position 36–43 (36–43 (GPSGCGKS)) interacts with ATP.

The protein belongs to the ABC transporter superfamily. Maltooligosaccharide importer (TC 3.A.1.1.1) family. As to quaternary structure, the complex is composed of two ATP-binding proteins (MalK), two transmembrane proteins (MalG and MalK) and a solute-binding protein (MalE).

The protein localises to the cell inner membrane. It catalyses the reaction D-maltose(out) + ATP + H2O = D-maltose(in) + ADP + phosphate + H(+). Functionally, part of the ABC transporter complex MalEFGK involved in maltose/maltodextrin import. Responsible for energy coupling to the transport system. The polypeptide is Maltose/maltodextrin import ATP-binding protein MalK (Salmonella paratyphi A (strain ATCC 9150 / SARB42)).